A 252-amino-acid chain; its full sequence is NLP effector protein Pc118356 (252 aa).

An N-terminal signal peptide occupies residues 1 to 17; the sequence is MALTVLAATALTALIMG. N-linked (GlcNAc...) asparagine glycans are attached at residues Asn20 and Asn67. The short motif at 121–127 is the Hepta-peptide GHRHDWE motif element; the sequence is QDRHFWE. A glycan (N-linked (GlcNAc...) asparagine) is linked at Asn166.

It belongs to the Necrosis inducing protein (NPP1) family.

Its subcellular location is the secreted. In terms of biological role, secreted effector that contributes strongly to virulence during infection by P.capsici. The protein is NLP effector protein Pc118356 of Phytophthora capsici.